A 108-amino-acid chain; its full sequence is uncharacterized protein (108 aa).

An N-terminal signal peptide occupies residues methionine 1–alanine 16. The N-palmitoyl cysteine moiety is linked to residue cysteine 17. Cysteine 17 carries S-diacylglycerol cysteine lipidation.

It localises to the cell membrane. This is an uncharacterized protein from Escherichia coli (strain K12).